Here is a 324-residue protein sequence, read N- to C-terminus: Dolichyl-phosphate beta-glucosyltransferase (324 aa).

Residues 1–7 (MAPLLLQ) lie on the Lumenal side of the membrane. The helical; Signal-anchor for type II membrane protein transmembrane segment at 8–28 (LAVLGAALAAAALVLISIVAF) threads the bilayer. Topologically, residues 29–324 (TTATKMPALH…WRLEQTRKMN (296 aa)) are cytoplasmic.

This sequence belongs to the glycosyltransferase 2 family. In terms of tissue distribution, expressed in pancreas, placenta, liver, heart, brain, kidney, skeletal muscle, and lung.

The protein resides in the endoplasmic reticulum membrane. It catalyses the reaction a di-trans,poly-cis-dolichyl phosphate + UDP-alpha-D-glucose = a di-trans,poly-cis-dolichyl beta-D-glucosyl phosphate + UDP. The protein operates within protein modification; protein glycosylation. Dolichyl-phosphate beta-glucosyltransferase that operates in the biosynthetic pathway of dolichol-linked oligosaccharides, the glycan precursors employed in protein asparagine (N)-glycosylation. The assembly of dolichol-linked oligosaccharides begins on the cytosolic side of the endoplasmic reticulum membrane and finishes in its lumen. The sequential addition of sugars to dolichol pyrophosphate produces dolichol-linked oligosaccharides containing fourteen sugars, including two GlcNAcs, nine mannoses and three glucoses. Once assembled, the oligosaccharide is transferred from the lipid to nascent proteins by oligosaccharyltransferases. Dolichyl-phosphate beta-glucosyltransferase produces dolichyl beta-D-glucosyl phosphate/Dol-P-Glc, the glucose donor substrate used sequentially by ALG6, ALG8 and ALG10 to add glucose residues on top of the Man(9)GlcNAc(2)-PP-Dol structure. These are the three last steps in the biosynthetic pathway of dolichol-linked oligosaccharides to produce Glc(3)Man(9)GlcNAc(2)-PP-Dol. The enzyme is most probably active on the cytoplasmic side of the endoplasmic reticulum while its product Dol-P-Glc is the substrate for ALG6, ALG8 and ALG11 in the lumen of the endoplasmic reticulum. This Homo sapiens (Human) protein is Dolichyl-phosphate beta-glucosyltransferase.